A 100-amino-acid polypeptide reads, in one-letter code: Aspartyl/glutamyl-tRNA(Asn/Gln) amidotransferase subunit C (100 aa).

It belongs to the GatC family. As to quaternary structure, heterotrimer of A, B and C subunits.

The enzyme catalyses L-glutamyl-tRNA(Gln) + L-glutamine + ATP + H2O = L-glutaminyl-tRNA(Gln) + L-glutamate + ADP + phosphate + H(+). It carries out the reaction L-aspartyl-tRNA(Asn) + L-glutamine + ATP + H2O = L-asparaginyl-tRNA(Asn) + L-glutamate + ADP + phosphate + 2 H(+). Allows the formation of correctly charged Asn-tRNA(Asn) or Gln-tRNA(Gln) through the transamidation of misacylated Asp-tRNA(Asn) or Glu-tRNA(Gln) in organisms which lack either or both of asparaginyl-tRNA or glutaminyl-tRNA synthetases. The reaction takes place in the presence of glutamine and ATP through an activated phospho-Asp-tRNA(Asn) or phospho-Glu-tRNA(Gln). The sequence is that of Aspartyl/glutamyl-tRNA(Asn/Gln) amidotransferase subunit C from Streptococcus thermophilus (strain ATCC BAA-491 / LMD-9).